Here is a 365-residue protein sequence, read N- to C-terminus: Testis-specific serine/threonine-protein kinase 1 (365 aa).

Positions 12–272 (YIMGINLGEG…IDEILNHCWV (261 aa)) constitute a Protein kinase domain. ATP-binding positions include 18 to 26 (LGEGSYAKV) and K41. The Proton acceptor role is filled by D136. T174 is subject to Phosphothreonine. The tract at residues 282-365 (GAINKEGESS…HPQQPSETHT (84 aa)) is disordered. Residues 303–330 (GADKKSATKLEPREEARSEARSESKPQE) show a composition bias toward basic and acidic residues. Residues 331 to 347 (DTLQVVRQSENVGLSSE) are compositionally biased toward polar residues.

Belongs to the protein kinase superfamily. CAMK Ser/Thr protein kinase family. Interacts with TSSK2. Interacts with HSP90; this interaction stabilizes TSSK1. It depends on Mg(2+) as a cofactor. Post-translationally, autophosphorylated. Ubiquitinated; HSP90 activity negatively regulates ubiquitination and degradation. In terms of tissue distribution, testis-specific. Expressed only in postmeiotic spermatids at the final stages of cytodifferentiation in the seminiferous tubules (at protein level). Not detected in released sperms in the lumen of the seminiferous tubules and the epididymis.

Its subcellular location is the cytoplasm. The protein localises to the cytoplasmic vesicle. It is found in the secretory vesicle. The protein resides in the acrosome. It localises to the cell projection. Its subcellular location is the cilium. The protein localises to the flagellum. The catalysed reaction is L-seryl-[protein] + ATP = O-phospho-L-seryl-[protein] + ADP + H(+). It catalyses the reaction L-threonyl-[protein] + ATP = O-phospho-L-threonyl-[protein] + ADP + H(+). With respect to regulation, activated by phosphorylation on Thr-174, potentially by autophosphorylation. Functionally, testis-specific serine/threonine-protein kinase required during spermatid development. Phosphorylates 'Ser-281' of TSKS. Involved in the late stages of spermatogenesis, during the reconstruction of the cytoplasm. During spermatogenesis, required for the transformation of a ring-shaped structure around the base of the flagellum originating from the chromatoid body. The polypeptide is Testis-specific serine/threonine-protein kinase 1 (Tssk1b) (Mus musculus (Mouse)).